A 435-amino-acid polypeptide reads, in one-letter code: Methylenetetrahydrofolate--tRNA-(uracil-5-)-methyltransferase TrmFO (435 aa).

9–14 provides a ligand contact to FAD; the sequence is GAGLAG.

Belongs to the MnmG family. TrmFO subfamily. FAD serves as cofactor.

It localises to the cytoplasm. It carries out the reaction uridine(54) in tRNA + (6R)-5,10-methylene-5,6,7,8-tetrahydrofolate + NADH + H(+) = 5-methyluridine(54) in tRNA + (6S)-5,6,7,8-tetrahydrofolate + NAD(+). The catalysed reaction is uridine(54) in tRNA + (6R)-5,10-methylene-5,6,7,8-tetrahydrofolate + NADPH + H(+) = 5-methyluridine(54) in tRNA + (6S)-5,6,7,8-tetrahydrofolate + NADP(+). Functionally, catalyzes the folate-dependent formation of 5-methyl-uridine at position 54 (M-5-U54) in all tRNAs. This Staphylococcus haemolyticus (strain JCSC1435) protein is Methylenetetrahydrofolate--tRNA-(uracil-5-)-methyltransferase TrmFO.